The primary structure comprises 478 residues: Lipoprotein lipase (478 aa).

The signal sequence occupies residues 1–28; the sequence is MESKALLLLALSVCLQSLTVSRGGLVAA. The interval 35–56 is interaction with GPIHBP1; sequence KDFRDIESKFALRTPEDTAEDT. Cysteines 57 and 70 form a disulfide. N-linked (GlcNAc...) asparagine glycosylation is present at asparagine 73. Tyrosine 124 bears the 3'-nitrotyrosine mark. Serine 162 acts as the Nucleophile in catalysis. The active-site Charge relay system is aspartate 186. Tyrosine 194 carries the post-translational modification 3'-nitrotyrosine. 4 residues coordinate Ca(2+): alanine 197, arginine 200, serine 202, and aspartate 205. Residues cysteine 246 and cysteine 269 are joined by a disulfide bond. The interval 246 to 269 is essential for determining substrate specificity; that stretch reads CNIGEALRVIAERGLGDVDQLVKC. Catalysis depends on histidine 271, which acts as the Charge relay system. Asparagine 287 carries an N-linked (GlcNAc...) asparagine glycan. 2 disulfide bridges follow: cysteine 294/cysteine 313 and cysteine 305/cysteine 308. The region spanning 344–467 is the PLAT domain; the sequence is FHYQVKIHFS…KGKSPVIFVK (124 aa). Tyrosine 346 carries the 3'-nitrotyrosine modification. Asparagine 389 is a glycosylation site (N-linked (GlcNAc...) asparagine). The tract at residues 420-424 is important for interaction with lipoprotein particles; that stretch reads WSNWW. Positions 433 to 437 are important for heparin binding; the sequence is KIRVK. An interaction with GPIHBP1 region spans residues 446 to 470; the sequence is IFCSREKMSYLQKGKSPVIFVKCHD. Cysteine 448 and cysteine 468 are joined by a disulfide.

The protein belongs to the AB hydrolase superfamily. Lipase family. As to quaternary structure, homodimer. Interacts with GPIHBP1 with 1:1 stoichiometry. Interacts with APOC2; the interaction activates LPL activity in the presence of lipids. Interaction with heparan sulfate proteoglycans is required to protect LPL against loss of activity. Associates with lipoprotein particles in blood plasma. Interacts with LMF1 and SEL1L; interaction with SEL1L is required to prevent aggregation of newly synthesized LPL in the endoplasmic reticulum (ER), and for normal export of LPL from the ER to the extracellular space. Interacts with SORL1; SORL1 acts as a sorting receptor, promoting LPL localization to endosomes and later to lysosomes, leading to degradation of newly synthesized LPL. Tyrosine nitration after lipopolysaccharide (LPS) challenge down-regulates the lipase activity. In terms of tissue distribution, detected in milk (at protein level).

It localises to the cell membrane. It is found in the secreted. The protein localises to the extracellular space. The protein resides in the extracellular matrix. The catalysed reaction is a triacylglycerol + H2O = a diacylglycerol + a fatty acid + H(+). The enzyme catalyses a 1,2-diacyl-sn-glycero-3-phosphocholine + H2O = a 2-acyl-sn-glycero-3-phosphocholine + a fatty acid + H(+). It catalyses the reaction 1,2,3-tri-(9Z-octadecenoyl)-glycerol + H2O = di-(9Z)-octadecenoylglycerol + (9Z)-octadecenoate + H(+). It carries out the reaction 1,2-di-(9Z-octadecenoyl)-sn-glycero-3-phosphocholine + H2O = (9Z-octadecenoyl)-sn-glycero-3-phosphocholine + (9Z)-octadecenoate + H(+). The catalysed reaction is 1,2,3-tributanoylglycerol + H2O = dibutanoylglycerol + butanoate + H(+). The enzyme catalyses 1,2-dihexadecanoyl-sn-glycero-3-phosphocholine + H2O = hexadecanoyl-sn-glycero-3-phosphocholine + hexadecanoate + H(+). With respect to regulation, the apolipoprotein APOC2 acts as a coactivator of LPL activity. Ca(2+) binding promotes protein stability and formation of the active homodimer. Interaction with GPIHBP1 protects LPL against inactivation by ANGPTL4. Its function is as follows. Key enzyme in triglyceride metabolism. Catalyzes the hydrolysis of triglycerides from circulating chylomicrons and very low density lipoproteins (VLDL), and thereby plays an important role in lipid clearance from the blood stream, lipid utilization and storage. Although it has both phospholipase and triglyceride lipase activities it is primarily a triglyceride lipase with low but detectable phospholipase activity. Mediates margination of triglyceride-rich lipoprotein particles in capillaries. Recruited to its site of action on the luminal surface of vascular endothelium by binding to GPIHBP1 and cell surface heparan sulfate proteoglycans. This is Lipoprotein lipase (LPL) from Bos taurus (Bovine).